The chain runs to 432 residues: MSDTTDVPENQKSPKPSGKADKRKIEEKPENSSLKRKKFEDPNKKVDPLEELPMKVPFKIVDGVRHLAPYWACYRTRTKGRWIGRKMVEVFSGEFLSTNRNYAKIACKMGRIYVNGEQMTDVDYVMRNGDRVEHWAHRHEHPIRDLPIRVISETDDLFVVEKPPSLPVHTCGQYAIHTVLGQLRVNEGRTGLRVLHRLDRATSGVLLFAKNYETDLEFKTTLKQGEWSKEYICKVDGVFPDEEQVCEQPIGPLVISMGIQCVRPDGKDAKSRFRKLWSDGTQSVVQVHIETGRTHQIRVHSQFLGHPIAGDQIYNSAVWGPTKGKNADYQKSFDELCEDVRNTHKCENWHEKPNPEFEQRMEHLAADTTPITPEAPSLTLEQRPEFDEICQKCNVESKKVPENHFQLYLHCLKYETKKWSFKTEMPDWAVQK.

Residues 1–14 show a composition bias toward polar residues; the sequence is MSDTTDVPENQKSP. The segment at 1–42 is disordered; sequence MSDTTDVPENQKSPKPSGKADKRKIEEKPENSSLKRKKFEDP. Positions 18–30 are enriched in basic and acidic residues; it reads GKADKRKIEEKPE. The S4 RNA-binding domain occupies 85–148; the sequence is RKMVEVFSGE…HEHPIRDLPI (64 aa). Asp-199 is a catalytic residue.

It belongs to the pseudouridine synthase RluA family.

This is an uncharacterized protein from Caenorhabditis elegans.